The following is a 199-amino-acid chain: ATP-dependent Clp protease proteolytic subunit (199 aa).

Residue serine 97 is the Nucleophile of the active site. Histidine 122 is an active-site residue.

The protein belongs to the peptidase S14 family. Fourteen ClpP subunits assemble into 2 heptameric rings which stack back to back to give a disk-like structure with a central cavity, resembling the structure of eukaryotic proteasomes.

The protein resides in the cytoplasm. It catalyses the reaction Hydrolysis of proteins to small peptides in the presence of ATP and magnesium. alpha-casein is the usual test substrate. In the absence of ATP, only oligopeptides shorter than five residues are hydrolyzed (such as succinyl-Leu-Tyr-|-NHMec, and Leu-Tyr-Leu-|-Tyr-Trp, in which cleavage of the -Tyr-|-Leu- and -Tyr-|-Trp bonds also occurs).. Its function is as follows. Cleaves peptides in various proteins in a process that requires ATP hydrolysis. Has a chymotrypsin-like activity. Plays a major role in the degradation of misfolded proteins. This Citrifermentans bemidjiense (strain ATCC BAA-1014 / DSM 16622 / JCM 12645 / Bem) (Geobacter bemidjiensis) protein is ATP-dependent Clp protease proteolytic subunit.